Reading from the N-terminus, the 514-residue chain is Cytochrome P450 94A1 (514 aa).

The helical transmembrane segment at 7 to 29 (EVLLPYLLPLLLLILPTTIFFLT) threads the bilayer. A heme-binding site is contributed by C458.

This sequence belongs to the cytochrome P450 family. It depends on heme as a cofactor.

It localises to the endoplasmic reticulum membrane. Its function is as follows. Catalyzes the omega-hydroxylation of various fatty acids (FA) from 10 to 18 carbon atoms. The substrate specificity is higher for laurate &gt; palmitate &gt; myristate &gt; linolenate &gt; linoleate &gt; oleate &gt; caprate. May play a minor role in cutin synthesis and could be involved in plant defense. This chain is Cytochrome P450 94A1 (CYP94A1), found in Vicia sativa (Spring vetch).